The sequence spans 305 residues: Oligopeptide transport system permease protein OppC (305 aa).

The next 6 helical transmembrane spans lie at 43–63 (AMVG…APMF), 105–125 (ISIF…VIWG), 166–185 (LFTI…ARIV), 212–232 (LFKH…TLTV), 236–256 (IFTE…LASW), and 274–294 (LFFP…VGDG). Positions 103-292 (ARISIFIGVA…ITMFGFNVVG (190 aa)) constitute an ABC transmembrane type-1 domain.

The protein belongs to the binding-protein-dependent transport system permease family. OppBC subfamily. The complex is composed of two ATP-binding proteins (OppD and OppF), two transmembrane proteins (OppB and OppC) and a solute-binding protein (OppA).

The protein localises to the cell membrane. Functionally, part of the ABC transporter complex OppABCDF involved in the uptake of oligopeptides. Probably responsible for the translocation of the substrate across the membrane. Required for sporulation and genetic competence. The polypeptide is Oligopeptide transport system permease protein OppC (Bacillus subtilis (strain 168)).